The sequence spans 346 residues: tRNA pseudouridine synthase D (346 aa).

D83 functions as the Nucleophile in the catalytic mechanism. A TRUD domain is found at G159–V305.

This sequence belongs to the pseudouridine synthase TruD family.

The enzyme catalyses uridine(13) in tRNA = pseudouridine(13) in tRNA. In terms of biological role, responsible for synthesis of pseudouridine from uracil-13 in transfer RNAs. This chain is tRNA pseudouridine synthase D, found in Hydrogenovibrio crunogenus (strain DSM 25203 / XCL-2) (Thiomicrospira crunogena).